A 154-amino-acid polypeptide reads, in one-letter code: Crossover junction endodeoxyribonuclease RuvC (154 aa).

Residues Asp7, Glu67, and Asp139 contribute to the active site. Mg(2+) contacts are provided by Asp7, Glu67, and Asp139.

It belongs to the RuvC family. In terms of assembly, homodimer which binds Holliday junction (HJ) DNA. The HJ becomes 2-fold symmetrical on binding to RuvC with unstacked arms; it has a different conformation from HJ DNA in complex with RuvA. In the full resolvosome a probable DNA-RuvA(4)-RuvB(12)-RuvC(2) complex forms which resolves the HJ. Mg(2+) serves as cofactor.

It is found in the cytoplasm. The enzyme catalyses Endonucleolytic cleavage at a junction such as a reciprocal single-stranded crossover between two homologous DNA duplexes (Holliday junction).. Functionally, the RuvA-RuvB-RuvC complex processes Holliday junction (HJ) DNA during genetic recombination and DNA repair. Endonuclease that resolves HJ intermediates. Cleaves cruciform DNA by making single-stranded nicks across the HJ at symmetrical positions within the homologous arms, yielding a 5'-phosphate and a 3'-hydroxyl group; requires a central core of homology in the junction. The consensus cleavage sequence is 5'-(A/T)TT(C/G)-3'. Cleavage occurs on the 3'-side of the TT dinucleotide at the point of strand exchange. HJ branch migration catalyzed by RuvA-RuvB allows RuvC to scan DNA until it finds its consensus sequence, where it cleaves and resolves the cruciform DNA. The polypeptide is Crossover junction endodeoxyribonuclease RuvC (Prochlorococcus marinus (strain MIT 9303)).